Consider the following 147-residue polypeptide: Hemoglobin subunit epsilon (147 aa).

The region spanning 3-147 is the Globin domain; the sequence is HFTAEEKSTI…VATALAHKYH (145 aa). A phosphoserine mark is found at Ser-14 and Ser-51. 2 residues coordinate heme b: His-64 and His-93.

This sequence belongs to the globin family. As to quaternary structure, heterotetramer of two alpha chains and two epsilon chains in early embryonic hemoglobin Gower-2; two zeta chains and two epsilon chains in early embryonic hemoglobin Gower-1. Red blood cells.

Its function is as follows. The epsilon chain is a beta-type chain of early mammalian embryonic hemoglobin. This chain is Hemoglobin subunit epsilon (HBE1), found in Propithecus verreauxi (White sifaka).